Consider the following 402-residue polypeptide: Methylthioribose-1-phosphate isomerase (402 aa).

Catalysis depends on D275, which acts as the Proton donor.

Belongs to the eIF-2B alpha/beta/delta subunits family. MtnA subfamily.

It is found in the cytoplasm. The protein resides in the nucleus. The catalysed reaction is 5-(methylsulfanyl)-alpha-D-ribose 1-phosphate = 5-(methylsulfanyl)-D-ribulose 1-phosphate. The protein operates within amino-acid biosynthesis; L-methionine biosynthesis via salvage pathway; L-methionine from S-methyl-5-thio-alpha-D-ribose 1-phosphate: step 1/6. Its function is as follows. Catalyzes the interconversion of methylthioribose-1-phosphate (MTR-1-P) into methylthioribulose-1-phosphate (MTRu-1-P). This chain is Methylthioribose-1-phosphate isomerase, found in Clavispora lusitaniae (strain ATCC 42720) (Yeast).